The sequence spans 217 residues: ATP phosphoribosyltransferase (217 aa).

It belongs to the ATP phosphoribosyltransferase family. Short subfamily. As to quaternary structure, heteromultimer composed of HisG and HisZ subunits.

It is found in the cytoplasm. It catalyses the reaction 1-(5-phospho-beta-D-ribosyl)-ATP + diphosphate = 5-phospho-alpha-D-ribose 1-diphosphate + ATP. Its pathway is amino-acid biosynthesis; L-histidine biosynthesis; L-histidine from 5-phospho-alpha-D-ribose 1-diphosphate: step 1/9. Its function is as follows. Catalyzes the condensation of ATP and 5-phosphoribose 1-diphosphate to form N'-(5'-phosphoribosyl)-ATP (PR-ATP). Has a crucial role in the pathway because the rate of histidine biosynthesis seems to be controlled primarily by regulation of HisG enzymatic activity. In Neisseria meningitidis serogroup A / serotype 4A (strain DSM 15465 / Z2491), this protein is ATP phosphoribosyltransferase (hisG).